Reading from the N-terminus, the 914-residue chain is Eukaryotic translation initiation factor 3 subunit C-like protein (914 aa).

The tract at residues 1–44 is disordered; it reads MSRFFTTGSDSESESSLSGEELVTKPVGGNYGKQPLLLSEDEED. Positions 8 to 21 are enriched in low complexity; that stretch reads GSDSESESSLSGEE. 7 positions are modified to phosphoserine: S9, S11, S13, S15, S16, S18, and S39. At K99 the chain carries N6-acetyllysine. 2 disordered regions span residues 157–302 and 523–543; these read TSYK…GGEW and QLTP…NEGE. 4 positions are modified to phosphoserine: S166, S178, S181, and S182. The segment covering 166-190 has biased composition (acidic residues); sequence SADEDAEKNEEDSEGSSDEDEDEDG. A compositionally biased stretch (basic and acidic residues) spans 199-216; the sequence is KKSEAPSGESRKFLKKMD. Positions 217–232 are enriched in acidic residues; sequence DEDEDSEDSEDDEDWD. The span at 261–278 shows a compositional bias: basic and acidic residues; the sequence is PTTDEDKKAAEKKREDKA. The span at 291–300 shows a compositional bias: acidic residues; that stretch reads EEEEEDNEGG. Polar residues predominate over residues 523–532; the sequence is QLTPPEGSSK. Residue T525 is modified to Phosphothreonine. Position 644 is an N6-acetyllysine (K644). A PCI domain is found at 674-850; that stretch reads FHLHINLELL…QTVVMHRTEP (177 aa). The tract at residues 886 to 914 is disordered; the sequence is FRDQKDGYRKNEGYMRRGGYRQQQSQTAY. Residues 887-900 are compositionally biased toward basic and acidic residues; the sequence is RDQKDGYRKNEGYM. The residue at position 910 (S910) is a Phosphoserine.

The protein belongs to the eIF-3 subunit C family. In terms of assembly, component of the eukaryotic translation initiation factor 3 (eIF-3) complex, which is composed of 13 subunits: EIF3A, EIF3B, EIF3C, EIF3D, EIF3E, EIF3F, EIF3G, EIF3H, EIF3I, EIF3J, EIF3K, EIF3L and EIF3M. The eIF-3 complex appears to include 3 stable modules: module A is composed of EIF3A, EIF3B, EIF3G and EIF3I; module B is composed of EIF3F, EIF3H, and EIF3M; and module C is composed of EIF3C, EIF3D, EIF3E, EIF3K and EIF3L. EIF3C of module C binds EIF3B of module A and EIF3H of module B, thereby linking the three modules. EIF3J is a labile subunit that binds to the eIF-3 complex via EIF3B. The eIF-3 complex interacts with RPS6KB1 under conditions of nutrient depletion. Mitogenic stimulation leads to binding and activation of a complex composed of MTOR and RPTOR, leading to phosphorylation and release of RPS6KB1 and binding of EIF4B to eIF-3. In terms of processing, phosphorylated. Phosphorylation is enhanced upon serum stimulation.

The protein resides in the cytoplasm. Component of the eukaryotic translation initiation factor 3 (eIF-3) complex, which is required for several steps in the initiation of protein synthesis. The eIF-3 complex associates with the 40S ribosome and facilitates the recruitment of eIF-1, eIF-1A, eIF-2:GTP:methionyl-tRNAi and eIF-5 to form the 43S pre-initiation complex (43S PIC). The eIF-3 complex stimulates mRNA recruitment to the 43S PIC and scanning of the mRNA for AUG recognition. The eIF-3 complex is also required for disassembly and recycling of post-termination ribosomal complexes and subsequently prevents premature joining of the 40S and 60S ribosomal subunits prior to initiation. The eIF-3 complex specifically targets and initiates translation of a subset of mRNAs involved in cell proliferation, including cell cycling, differentiation and apoptosis, and uses different modes of RNA stem-loop binding to exert either translational activation or repression. The sequence is that of Eukaryotic translation initiation factor 3 subunit C-like protein (EIF3CL) from Homo sapiens (Human).